A 257-amino-acid chain; its full sequence is Homeobox protein goosecoid (257 aa).

Positions Lys-160–Lys-219 form a DNA-binding region, homeobox. The disordered stretch occupies residues Ala-213–Ser-257. Basic and acidic residues predominate over residues Ser-241–Ser-257.

The protein belongs to the paired homeobox family. Bicoid subfamily.

The protein resides in the nucleus. Its function is as follows. Regulates chordin (CHRD). May play a role in spatial programing within discrete embryonic fields or lineage compartments during organogenesis. In concert with NKX3-2, plays a role in defining the structural components of the middle ear; required for the development of the entire tympanic ring. Probably involved in the regulatory networks that define neural crest cell fate specification and determine mesoderm cell lineages in mammals. This Saguinus labiatus (Red-chested mustached tamarin) protein is Homeobox protein goosecoid (GSC).